Reading from the N-terminus, the 676-residue chain is Methionine--tRNA ligase (676 aa).

Positions proline 15 to histidine 25 match the 'HIGH' region motif. Zn(2+) is bound by residues cysteine 146, cysteine 149, cysteine 159, and cysteine 162. Residues lysine 332–serine 336 carry the 'KMSKS' region motif. Lysine 335 lines the ATP pocket. Residues aspartate 575–lysine 676 enclose the tRNA-binding domain.

This sequence belongs to the class-I aminoacyl-tRNA synthetase family. MetG type 1 subfamily. Homodimer. Requires Zn(2+) as cofactor.

Its subcellular location is the cytoplasm. It carries out the reaction tRNA(Met) + L-methionine + ATP = L-methionyl-tRNA(Met) + AMP + diphosphate. Its function is as follows. Is required not only for elongation of protein synthesis but also for the initiation of all mRNA translation through initiator tRNA(fMet) aminoacylation. This is Methionine--tRNA ligase from Shewanella sp. (strain MR-4).